Here is a 502-residue protein sequence, read N- to C-terminus: ATP synthase subunit alpha (502 aa).

G169–T176 lines the ATP pocket.

The protein belongs to the ATPase alpha/beta chains family. In terms of assembly, F-type ATPases have 2 components, CF(1) - the catalytic core - and CF(0) - the membrane proton channel. CF(1) has five subunits: alpha(3), beta(3), gamma(1), delta(1), epsilon(1). CF(0) has three main subunits: a(1), b(2) and c(9-12). The alpha and beta chains form an alternating ring which encloses part of the gamma chain. CF(1) is attached to CF(0) by a central stalk formed by the gamma and epsilon chains, while a peripheral stalk is formed by the delta and b chains.

Its subcellular location is the cell inner membrane. The enzyme catalyses ATP + H2O + 4 H(+)(in) = ADP + phosphate + 5 H(+)(out). Functionally, produces ATP from ADP in the presence of a proton gradient across the membrane. The alpha chain is a regulatory subunit. This is ATP synthase subunit alpha from Hydrogenobaculum sp. (strain Y04AAS1).